We begin with the raw amino-acid sequence, 255 residues long: Ras-like protein family member 12 (255 aa).

Residues glycine 30–serine 37, aspartate 77–glutamine 81, and asparagine 137–aspartate 140 contribute to the GTP site.

This sequence belongs to the small GTPase superfamily. Ras family.

It carries out the reaction GTP + H2O = GDP + phosphate + H(+). In Danio rerio (Zebrafish), this protein is Ras-like protein family member 12 (RASL12).